A 154-amino-acid polypeptide reads, in one-letter code: Small ribosomal subunit protein uS15 (154 aa).

The segment covering 1–14 (MAPVPHRSRHKKGR) has biased composition (basic residues). Positions 1–24 (MAPVPHRSRHKKGRSGSVRPAHPT) are disordered.

The protein belongs to the universal ribosomal protein uS15 family. In terms of assembly, part of the 30S ribosomal subunit.

The polypeptide is Small ribosomal subunit protein uS15 (Pyrobaculum arsenaticum (strain DSM 13514 / JCM 11321 / PZ6)).